Here is a 614-residue protein sequence, read N- to C-terminus: Phosphomethylpyrimidine synthase (614 aa).

Substrate is bound by residues Asn226, Met255, Tyr284, His320, 340–342, 381–384, and Glu420; these read SRG and DGLR. His424 contacts Zn(2+). Tyr447 is a binding site for substrate. His488 is a binding site for Zn(2+). [4Fe-4S] cluster-binding residues include Cys568, Cys571, and Cys576.

This sequence belongs to the ThiC family. In terms of assembly, homodimer. It depends on [4Fe-4S] cluster as a cofactor.

It catalyses the reaction 5-amino-1-(5-phospho-beta-D-ribosyl)imidazole + S-adenosyl-L-methionine = 4-amino-2-methyl-5-(phosphooxymethyl)pyrimidine + CO + 5'-deoxyadenosine + formate + L-methionine + 3 H(+). It participates in cofactor biosynthesis; thiamine diphosphate biosynthesis. Its function is as follows. Catalyzes the synthesis of the hydroxymethylpyrimidine phosphate (HMP-P) moiety of thiamine from aminoimidazole ribotide (AIR) in a radical S-adenosyl-L-methionine (SAM)-dependent reaction. In Acidovorax sp. (strain JS42), this protein is Phosphomethylpyrimidine synthase.